Here is a 342-residue protein sequence, read N- to C-terminus: Heat-inducible transcription repressor HrcA (342 aa).

The protein belongs to the HrcA family.

Negative regulator of class I heat shock genes (grpE-dnaK-dnaJ and groELS operons). Prevents heat-shock induction of these operons. The chain is Heat-inducible transcription repressor HrcA from Geobacter sulfurreducens (strain ATCC 51573 / DSM 12127 / PCA).